The following is a 190-amino-acid chain: Elongation factor P-like protein (190 aa).

The protein belongs to the elongation factor P family.

The chain is Elongation factor P-like protein from Yersinia pestis bv. Antiqua (strain Antiqua).